The primary structure comprises 260 residues: Putative ABC transporter ATP-binding protein PF0068 (260 aa).

Residues 2-234 enclose the ABC transporter domain; the sequence is IEVKGVWFWY…DLKRYKLEEP (233 aa). 34 to 41 lines the ATP pocket; the sequence is GPNGSGKT.

This sequence belongs to the ABC transporter superfamily.

It is found in the cell membrane. Functionally, probably part of an ABC transporter complex. Responsible for energy coupling to the transport system. The sequence is that of Putative ABC transporter ATP-binding protein PF0068 from Pyrococcus furiosus (strain ATCC 43587 / DSM 3638 / JCM 8422 / Vc1).